A 132-amino-acid chain; its full sequence is Small ribosomal subunit protein uS8 (132 aa).

Belongs to the universal ribosomal protein uS8 family. Part of the 30S ribosomal subunit. Contacts proteins S5 and S12.

One of the primary rRNA binding proteins, it binds directly to 16S rRNA central domain where it helps coordinate assembly of the platform of the 30S subunit. This chain is Small ribosomal subunit protein uS8, found in Stenotrophomonas maltophilia (strain K279a).